The following is a 183-amino-acid chain: UPF0200 protein MmarC7_0527 (183 aa).

Residue 8–15 (GMPGSGKS) coordinates ATP.

Belongs to the UPF0200 family.

This Methanococcus maripaludis (strain C7 / ATCC BAA-1331) protein is UPF0200 protein MmarC7_0527.